The sequence spans 97 residues: Large ribosomal subunit protein uL23 (97 aa).

It belongs to the universal ribosomal protein uL23 family. Part of the 50S ribosomal subunit. Contacts protein L29, and trigger factor when it is bound to the ribosome.

In terms of biological role, one of the early assembly proteins it binds 23S rRNA. One of the proteins that surrounds the polypeptide exit tunnel on the outside of the ribosome. Forms the main docking site for trigger factor binding to the ribosome. In Anaeromyxobacter dehalogenans (strain 2CP-1 / ATCC BAA-258), this protein is Large ribosomal subunit protein uL23.